Here is a 141-residue protein sequence, read N- to C-terminus: Hemoglobin subunit alpha-D (141 aa).

The Globin domain occupies 1-141 (MLGAEETALV…VAAVLAEKYR (141 aa)). Heme b contacts are provided by histidine 58 and histidine 87.

It belongs to the globin family. Heterotetramer of two alpha-D chains and two beta chains. Red blood cells.

Functionally, involved in oxygen transport from the lung to the various peripheral tissues. This Phalacrocorax carbo (Great cormorant) protein is Hemoglobin subunit alpha-D (HBAD).